The chain runs to 64 residues: Large ribosomal subunit protein bL35 (64 aa).

The protein belongs to the bacterial ribosomal protein bL35 family.

This Acinetobacter baumannii (strain AB307-0294) protein is Large ribosomal subunit protein bL35.